Consider the following 206-residue polypeptide: Pyridoxine/pyridoxamine 5'-phosphate oxidase (206 aa).

FMN-binding positions include 54–59 (RVVLLK), 69–70 (YT), arginine 75, lysine 76, and glutamine 98. Substrate is bound at residue lysine 59. Positions 116, 120, and 124 each coordinate substrate. Residues 133–134 (QS) and tryptophan 178 each bind FMN. Residue 184–186 (RLH) coordinates substrate. Arginine 188 contributes to the FMN binding site.

Belongs to the pyridoxamine 5'-phosphate oxidase family. In terms of assembly, homodimer. The cofactor is FMN.

The catalysed reaction is pyridoxamine 5'-phosphate + O2 + H2O = pyridoxal 5'-phosphate + H2O2 + NH4(+). The enzyme catalyses pyridoxine 5'-phosphate + O2 = pyridoxal 5'-phosphate + H2O2. It participates in cofactor metabolism; pyridoxal 5'-phosphate salvage; pyridoxal 5'-phosphate from pyridoxamine 5'-phosphate: step 1/1. It functions in the pathway cofactor metabolism; pyridoxal 5'-phosphate salvage; pyridoxal 5'-phosphate from pyridoxine 5'-phosphate: step 1/1. Functionally, catalyzes the oxidation of either pyridoxine 5'-phosphate (PNP) or pyridoxamine 5'-phosphate (PMP) into pyridoxal 5'-phosphate (PLP). The sequence is that of Pyridoxine/pyridoxamine 5'-phosphate oxidase from Anaplasma phagocytophilum (strain HZ).